A 250-amino-acid polypeptide reads, in one-letter code: Pyrroloquinoline-quinone synthase (250 aa).

Belongs to the PqqC family.

It catalyses the reaction 6-(2-amino-2-carboxyethyl)-7,8-dioxo-1,2,3,4,7,8-hexahydroquinoline-2,4-dicarboxylate + 3 O2 = pyrroloquinoline quinone + 2 H2O2 + 2 H2O + H(+). It functions in the pathway cofactor biosynthesis; pyrroloquinoline quinone biosynthesis. Its function is as follows. Ring cyclization and eight-electron oxidation of 3a-(2-amino-2-carboxyethyl)-4,5-dioxo-4,5,6,7,8,9-hexahydroquinoline-7,9-dicarboxylic-acid to PQQ. The sequence is that of Pyrroloquinoline-quinone synthase from Pseudomonas aeruginosa (strain LESB58).